A 56-amino-acid chain; its full sequence is Large ribosomal subunit protein eL40 (56 aa).

The protein belongs to the eukaryotic ribosomal protein eL40 family.

This Saccharolobus islandicus (strain Y.N.15.51 / Yellowstone #2) (Sulfolobus islandicus) protein is Large ribosomal subunit protein eL40.